Consider the following 99-residue polypeptide: NADH-quinone oxidoreductase subunit K (99 aa).

3 consecutive transmembrane segments (helical) span residues Pro-3–Leu-23, Ile-28–Phe-48, and Met-59–Ile-79.

It belongs to the complex I subunit 4L family. As to quaternary structure, NDH-1 is composed of 14 different subunits. Subunits NuoA, H, J, K, L, M, N constitute the membrane sector of the complex.

The protein localises to the cell membrane. The enzyme catalyses a quinone + NADH + 5 H(+)(in) = a quinol + NAD(+) + 4 H(+)(out). In terms of biological role, NDH-1 shuttles electrons from NADH, via FMN and iron-sulfur (Fe-S) centers, to quinones in the respiratory chain. The immediate electron acceptor for the enzyme in this species is believed to be a menaquinone. Couples the redox reaction to proton translocation (for every two electrons transferred, four hydrogen ions are translocated across the cytoplasmic membrane), and thus conserves the redox energy in a proton gradient. This Mycobacterium marinum (strain ATCC BAA-535 / M) protein is NADH-quinone oxidoreductase subunit K.